Consider the following 359-residue polypeptide: sn-1 linoleoyl-lipid 6-desaturase (359 aa).

Helical transmembrane passes span 45-65 and 69-89; these read LIIVLWLFSAWAFVLFAPVIF and LLGCMVLAIALAAFSFNVGHD. The Histidine box-1 signature appears at 88–92; that stretch reads HDANH. The short motif at 123–128 is the Histidine box-2 element; sequence HNYLHH. Helical transmembrane passes span 165–185, 206–226, and 231–251; these read IWGLYLFIPFYWFLYDVYLVL, LLGIKLLWLGYVFGLPLALGF, and VLIGASVTYMTYGIVVCTIFM. The short motif at 306 to 310 is the Histidine box-3 element; that stretch reads HHLFP.

The protein belongs to the fatty acid desaturase type 2 family. Fe(2+) serves as cofactor.

It localises to the membrane. It catalyses the reaction a 1-[(9Z,12Z)-octadecdienoyl]-2-acyl-glycerolipid + 2 reduced [2Fe-2S]-[ferredoxin] + O2 + 2 H(+) = a 1-[(6Z,9Z,12Z)-octadectrienoyl]-2-acyl-glycerolipid + 2 oxidized [2Fe-2S]-[ferredoxin] + 2 H2O. Its pathway is lipid metabolism; polyunsaturated fatty acid biosynthesis. Functionally, desaturase involved in fatty acid biosynthesis. Introduces a double bond at carbon 6 of linoleoyl group (18:2) attached to the sn-1 position of the glycerol moiety of membrane glycerolipids, leading to the formation of gamma-linolenic acid (GLA). The chain is sn-1 linoleoyl-lipid 6-desaturase from Synechocystis sp. (strain ATCC 27184 / PCC 6803 / Kazusa).